Consider the following 243-residue polypeptide: Small ribosomal subunit protein uS3 (243 aa).

One can recognise a KH type-2 domain in the interval I39–E110. The segment at D215 to K243 is disordered. A compositionally biased stretch (basic and acidic residues) spans Q233 to K243.

It belongs to the universal ribosomal protein uS3 family. In terms of assembly, part of the 30S ribosomal subunit. Forms a tight complex with proteins S10 and S14.

In terms of biological role, binds the lower part of the 30S subunit head. Binds mRNA in the 70S ribosome, positioning it for translation. In Prochlorococcus marinus (strain MIT 9211), this protein is Small ribosomal subunit protein uS3.